The following is a 277-amino-acid chain: 2-dehydro-3-deoxyphosphooctonate aldolase (277 aa).

Belongs to the KdsA family.

The protein localises to the cytoplasm. The catalysed reaction is D-arabinose 5-phosphate + phosphoenolpyruvate + H2O = 3-deoxy-alpha-D-manno-2-octulosonate-8-phosphate + phosphate. Its pathway is carbohydrate biosynthesis; 3-deoxy-D-manno-octulosonate biosynthesis; 3-deoxy-D-manno-octulosonate from D-ribulose 5-phosphate: step 2/3. The protein operates within bacterial outer membrane biogenesis; lipopolysaccharide biosynthesis. The protein is 2-dehydro-3-deoxyphosphooctonate aldolase of Brucella anthropi (strain ATCC 49188 / DSM 6882 / CCUG 24695 / JCM 21032 / LMG 3331 / NBRC 15819 / NCTC 12168 / Alc 37) (Ochrobactrum anthropi).